We begin with the raw amino-acid sequence, 252 residues long: Large ribosomal subunit protein uL29m (252 aa).

Residue K146 is modified to N6-acetyllysine.

The protein belongs to the universal ribosomal protein uL29 family. In terms of assembly, component of the mitochondrial ribosome large subunit (39S) which comprises a 16S rRNA and about 50 distinct proteins.

The protein resides in the mitochondrion. In Bos taurus (Bovine), this protein is Large ribosomal subunit protein uL29m (MRPL47).